A 717-amino-acid chain; its full sequence is MGDLPPYPERPAQQPPGRRTSQASQRRHSRDQAQALAADPEERQQIPPDAQRNAPGWSQRGSLSQQENLLMPQVFQAEEARLGGMEYPSVNTGFPSEFQPQPYSDESRMQVAELTTSLMLQRLQQGQSSLFQQLDPTFQEPPVNPLGQFNLYQTDQFSEGAQHGPYIRDDPALQFLPSELGFPHYSAQVPEPEPLELAVQNAKAYLLQTSINCDLSLYEHLVNLLTKILNQRPEDPLSVLESLNRTTQWEWFHPKLDTLRDDPEMQPTYKMAEKQKALFTRSGGGTEGEQEMEEEVGETPVPNIMETAFYFEQAGVGLSSDESFRIFLAMKQLVEQQPIHTCRFWGKILGIKRSYLVAEVEFREGEEEAEEEEVEEMTEGGEVMEAHGEEEGEEDEEKAVDIVPKSVWKPPPVIPKEESRSGANKYLYFVCNEPGLPWTRLPHVTPAQIVNARKIKKFFTGYLDTPVVSYPPFPGNEANYLRAQIARISAATQVSPLGFYQFSEEEGDEEEEGGAGRDSYEENPDFEGIPVLELVDSMANWVHHTQHILPQGRCTWVNPLQKTEEEEDLGEEEEKADEGPEEVEQEVGPPLLTPLSEDAEIMHLAPWTTRLSCSLCPQYSVAVVRSNLWPGAYAYASGKKFENIYIGWGHKYSPESFNPALPAPIQQEYPSGPEIMEMSDPTVEEEQALKAAQEQALGATEEEEEGEEEEEGEETDD.

4 disordered regions span residues 1–65 (MGDL…SLSQ), 503–523 (SEEE…YEEN), 563–588 (TEEE…QEVG), and 672–717 (GPEI…ETDD). Composition is skewed to acidic residues over residues 503–513 (SEEEGDEEEEG), 564–585 (EEEE…EVEQ), and 700–717 (TEEE…ETDD).

Belongs to the flagellar radial spoke RSP4/6 family. As to quaternary structure, component of the axonemal radial spoke 1 (RS1) and 2 (RS2) complexes, at least composed of spoke head proteins RSPH1, RSPH3, RSPH9 and the cilia-specific component RSPH4A or sperm-specific component RSPH6A, spoke stalk proteins RSPH14, DNAJB13, DYDC1, ROPN1L and NME5, and the RS1 complex-specific anchor protein IQUB. Interacts with RSPH1. Interacts with RSPH3B. Interacts with RSPH4A. Interacts with RSPH9. Interacts with RSPH10B. In terms of processing, phosphorylated by PKA. Phosphorylation increases in capacitated sperm.

The protein resides in the cytoplasm. It localises to the cytoskeleton. It is found in the flagellum axoneme. Functions as part of radial spoke complexes in the axoneme of sperm flagella that play an important part in motility. The triple radial spokes (RS1, RS2 and RS3) are required to modulate beating of the sperm flagellum. This is Radial spoke head protein 6 homolog A from Homo sapiens (Human).